Reading from the N-terminus, the 236-residue chain is MNIFDRKINFDALFKFSHITPSTQQHLKKVYASFALCMFVAAAGAYIHVVTHFIQAGLLSALGSLGLMIWLMATPHSHETEQKRLGLLAGFAFLTGVGLGPALDLCIAINPSILPTAFMGTAMIFTCFTLSALYARRRSYLFLGGILMSAMSLMLLSSLGNLFFGSVWLFQANLYMGLVVMCGFVLFDTQLIIEKAENGDKDYIWHCVDLFLDFVTLFRKLMMILAMNEKDKKKKK.

Topologically, residues 1 to 29 (MNIFDRKINFDALFKFSHITPSTQQHLKK) are cytoplasmic. K7 participates in a covalent cross-link: Glycyl lysine isopeptide (Lys-Gly) (interchain with G-Cter in ubiquitin). The helical transmembrane segment at 30–50 (VYASFALCMFVAAAGAYIHVV) threads the bilayer. At 51–52 (TH) the chain is on the lumenal side. A helical transmembrane segment spans residues 53-73 (FIQAGLLSALGSLGLMIWLMA). At 74-86 (TPHSHETEQKRLG) the chain is on the cytoplasmic side. A helical membrane pass occupies residues 87 to 107 (LLAGFAFLTGVGLGPALDLCI). At 108–112 (AINPS) the chain is on the lumenal side. A helical membrane pass occupies residues 113–133 (ILPTAFMGTAMIFTCFTLSAL). Residues 134 to 139 (YARRRS) are Cytoplasmic-facing. Residues 140-160 (YLFLGGILMSAMSLMLLSSLG) traverse the membrane as a helical segment. At 161–166 (NLFFGS) the chain is on the lumenal side. A helical membrane pass occupies residues 167–187 (VWLFQANLYMGLVVMCGFVLF). Residues 188-206 (DTQLIIEKAENGDKDYIWH) are Cytoplasmic-facing. An intramembrane region (helical) is located at residues 207–227 (CVDLFLDFVTLFRKLMMILAM). Residues 228 to 236 (NEKDKKKKK) lie on the Cytoplasmic side of the membrane.

This sequence belongs to the BI1 family. Interacts with BCL2 and BCL2L1. Interacts with ERN1. Post-translationally, ubiquitinated by BFAR, leading to proteasomal degradation.

It localises to the endoplasmic reticulum membrane. Functionally, endoplasmic reticulum (ER)-resident protein that confers cellular protection as an anti-apoptotic protein by limiting multiple stress-inducing pathways surrounding the endoplasmic reticulum and mitochondria. Inhibits the activities of the key sensor for the endoplasmic reticulum unfolded protein response IRE1alpha/ERN1 both directly and by blocking BAX/BAK binding. Modulates ER calcium homeostasis by acting as a calcium-leak channel. Negatively regulates autophagy and autophagosome formation, especially during periods of nutrient deprivation, and reduces cell survival during starvation. This Bos taurus (Bovine) protein is Bax inhibitor 1 (TMBIM6).